The following is a 154-amino-acid chain: Transcription antitermination protein NusB (154 aa).

This sequence belongs to the NusB family.

Its function is as follows. Involved in transcription antitermination. Required for transcription of ribosomal RNA (rRNA) genes. Binds specifically to the boxA antiterminator sequence of the ribosomal RNA (rrn) operons. This chain is Transcription antitermination protein NusB, found in Bordetella parapertussis (strain 12822 / ATCC BAA-587 / NCTC 13253).